The chain runs to 459 residues: Inositol-trisphosphate 3-kinase A (459 aa).

The disordered stretch occupies residues 1-29 (MTLPGRPTGMARPRGAGPCSPGLERAPRR). An omega-N-methylarginine mark is found at R35, R55, and R62. The interval 49 to 164 (AAAGEPRARG…TSEDVGQKSH (116 aa)) is disordered. Residues 116 to 132 (RRLSTSSLSSTGSSSLL) show a composition bias toward low complexity. A phosphoserine mark is found at S135 and S195. Residues S195, K207, 247-249 (QDL), and D260 contribute to the ATP site. Substrate-binding residues include K262 and R283. The tract at residues 285–293 (DMYKKMLAV) is calmodulin-binding. 310 to 317 (KPRYMQWR) contributes to the substrate binding site. The ATP site is built by K334 and D414. K417 provides a ligand contact to substrate.

It belongs to the inositol phosphokinase (IPK) family.

The protein localises to the cytoplasm. The protein resides in the cytoskeleton. It catalyses the reaction 1D-myo-inositol 1,4,5-trisphosphate + ATP = 1D-myo-inositol 1,3,4,5-tetrakisphosphate + ADP + H(+). With respect to regulation, activated by calcium/calmodulin. In terms of biological role, catalyzes the phosphorylation of 1D-myo-inositol 1,4,5-trisphosphate (InsP3) into 1D-myo-inositol 1,3,4,5-tetrakisphosphate and participates to the regulation of calcium homeostasis. The chain is Inositol-trisphosphate 3-kinase A from Mus musculus (Mouse).